Consider the following 598-residue polypeptide: Thiol:disulfide interchange protein DsbD (598 aa).

Positions 1 to 19 (MAYRIITLILLLCSTSATA) are cleaved as a signal peptide. C122 and C128 are joined by a disulfide. Residues 147–187 (DGQATAIEPMPSTSSRPAFNPPLPVEPRPAPELATSPAPAA) are disordered. A compositionally biased stretch (pro residues) spans 165–176 (FNPPLPVEPRPA). 7 consecutive transmembrane segments (helical) span residues 197 to 217 (LPFT…TPCV), 242 to 262 (LLAF…GLVV), 277 to 297 (YVLV…FGLF), 330 to 350 (IAGL…LLYI), 356 to 376 (LWLG…PLIL), 391 to 411 (WMSH…VFLL), and 423 to 443 (LWSM…LGAT). A disulfide bridge links C216 with C338. Residues 459 to 598 (LVSARPLQDW…FSAHLRDWQA (140 aa)) form the Thioredoxin domain. C513 and C516 are joined by a disulfide.

It belongs to the thioredoxin family. DsbD subfamily.

The protein resides in the cell inner membrane. The enzyme catalyses [protein]-dithiol + NAD(+) = [protein]-disulfide + NADH + H(+). It carries out the reaction [protein]-dithiol + NADP(+) = [protein]-disulfide + NADPH + H(+). In terms of biological role, required to facilitate the formation of correct disulfide bonds in some periplasmic proteins and for the assembly of the periplasmic c-type cytochromes. Acts by transferring electrons from cytoplasmic thioredoxin to the periplasm. This transfer involves a cascade of disulfide bond formation and reduction steps. This Klebsiella pneumoniae subsp. pneumoniae (strain ATCC 700721 / MGH 78578) protein is Thiol:disulfide interchange protein DsbD.